Consider the following 209-residue polypeptide: Uridine kinase (209 aa).

ATP is bound at residue 12–19; it reads GGSGSGKT.

It belongs to the uridine kinase family.

The protein localises to the cytoplasm. It catalyses the reaction uridine + ATP = UMP + ADP + H(+). The catalysed reaction is cytidine + ATP = CMP + ADP + H(+). It participates in pyrimidine metabolism; CTP biosynthesis via salvage pathway; CTP from cytidine: step 1/3. Its pathway is pyrimidine metabolism; UMP biosynthesis via salvage pathway; UMP from uridine: step 1/1. The protein is Uridine kinase of Listeria welshimeri serovar 6b (strain ATCC 35897 / DSM 20650 / CCUG 15529 / CIP 8149 / NCTC 11857 / SLCC 5334 / V8).